The primary structure comprises 339 residues: Trace amine-associated receptor 1 (339 aa).

The Extracellular segment spans residues 1–25; the sequence is MMPFCHNIINISCVKNNWSNDVRAS. 3 disulfides stabilise this stretch: Cys5–Cys178, Cys13–Cys88, and Cys96–Cys182. Asn10 and Asn17 each carry an N-linked (GlcNAc...) asparagine glycan. Residues 26-46 traverse the membrane as a helical segment; sequence LYSLMVLIILTTLVGNLIVIV. At 47–59 the chain is on the cytoplasmic side; it reads SISHFKELHTPTN. Residues 60 to 80 form a helical membrane-spanning segment; sequence WLIHSMATVDFLPGCLVMPYS. Topologically, residues 81–98 are extracellular; sequence MVRSAEHCWYFGEVFCKI. The chain crosses the membrane as a helical span at residues 99–119; sequence HTSTDIMLSSASIFHLSFISI. Position 103 (Asp103) interacts with 2-phenylethylamine. Residues 120–136 are Cytoplasmic-facing; the sequence is DRYYAVCDPLRYKAKIN. The helical transmembrane segment at 137–157 threads the bilayer; sequence ILVICVMIFISWSVPAVFAFG. The Extracellular portion of the chain corresponds to 158–188; it reads MIFLELNFKGAEEIYYKHVHCRGGCSVFFSK. A helical membrane pass occupies residues 189 to 209; it reads ISGVLTFMTSFYIPGSIMLCV. The Cytoplasmic portion of the chain corresponds to 210–252; it reads YYRIYLIAKEQARLINDANQKLQIGLEMKNGISQSKERKAVKT. The chain crosses the membrane as a helical span at residues 253–273; the sequence is LGIVMGVFLICWCPFFICTVM. Residues 274 to 287 are Extracellular-facing; sequence DPFLHYIIPPTLND. Residues 288–308 form a helical membrane-spanning segment; the sequence is VLIWFGYLNSTFNPMVYAFFY. Over 309-339 the chain is Cytoplasmic; it reads PWFRKALKMMLFGKIFQKDSSRCKLFLELSS.

It belongs to the G-protein coupled receptor 1 family.

Its subcellular location is the endomembrane system. It localises to the endoplasmic reticulum membrane. The protein resides in the cell membrane. Functionally, intracellular G-protein coupled receptor for trace amines, which recognizes endogenous amine-containing metabolites such as beta-phenylethylamine (beta-PEA), 3-iodothyronamine (T1AM), isoamylamine (IAA), cadaverine (CAD), cyclohexylamine (CHA), p-tyramine (p-TYR), trimethylamine (TMA), octopamine and tryptamine. Also functions as a receptor for various drugs and psychoactive substances, such as amphetamine and methamphetamine. Unresponsive to classical biogenic amines, such as epinephrine and histamine and only partially activated by dopamine and serotonin. Expressed in both the central and peripheral nervous system: TAAR1 activation regulates the activity of several neurotransmitter signaling pathways by (1) decreasing the basal firing rates of the neurons involved and by (2) lowering the sensitivity of receptors to neurotransmitters. Ligand binding causes a conformation change that triggers signaling via guanine nucleotide-binding proteins (G proteins) and modulates the activity of downstream effectors. TAAR1 is coupled with different G(i)/G(o)-, G(s)- or G(q)/G(11) classes of G alpha proteins depending on the ligand. CAD-binding is coupled to G(i)/G(o) G alpha proteins and mediates inhibition of adenylate cyclase activity. T1AM- or beta-PEA-binding is coupled to G(s) G alpha proteins and mediates activation of adenylate cyclase activity. CHA- or IAA-binding is coupled to G(q)/G(11) G alpha proteins and activates phospholipase C-beta, releasing diacylglycerol (DAG) and inositol 1,4,5-trisphosphate (IP3) second messengers. TMA-binding is coupled with all three G(i)/G(o)-, G(s)- or G(q)/G(11) G alpha protein subtypes. The polypeptide is Trace amine-associated receptor 1 (TAAR1) (Pan troglodytes (Chimpanzee)).